Reading from the N-terminus, the 303-residue chain is Lipase chaperone (303 aa).

The chain crosses the membrane as a helical span at residues 7-23; the sequence is TLAAACAAWLAWWAWPD.

The protein belongs to the lipase chaperone family.

The protein localises to the cell inner membrane. Its function is as follows. May be involved in the folding of the extracellular lipase during its passage through the periplasm. This is Lipase chaperone (lifO) from Chromobacterium violaceum (strain ATCC 12472 / DSM 30191 / JCM 1249 / CCUG 213 / NBRC 12614 / NCIMB 9131 / NCTC 9757 / MK).